A 496-amino-acid chain; its full sequence is Galactose/methyl galactoside import ATP-binding protein MglA (496 aa).

ABC transporter domains lie at 5–240 (LTIR…VGRT) and 243–496 (KRFP…ARYL). 37-44 (GENGAGKS) is a binding site for ATP.

It belongs to the ABC transporter superfamily. Galactose/methyl galactoside importer (TC 3.A.1.2.3) family. The complex is composed of one ATP-binding protein (MglA), two transmembrane proteins (MglC) and a solute-binding protein (MglB).

The protein resides in the cell inner membrane. The enzyme catalyses D-galactose(out) + ATP + H2O = D-galactose(in) + ADP + phosphate + H(+). It carries out the reaction methyl beta-D-galactoside(out) + ATP + H2O = methyl beta-D-galactoside(in) + ADP + phosphate + H(+). In terms of biological role, part of the ABC transporter complex MglABC involved in galactose/methyl galactoside import. Responsible for energy coupling to the transport system. The polypeptide is Galactose/methyl galactoside import ATP-binding protein MglA (Treponema pallidum (strain Nichols)).